A 251-amino-acid polypeptide reads, in one-letter code: Maleate isomerase (251 aa).

Residues Asn14, 76–78 (CLV), Tyr133, and Asn163 each bind substrate. Cys76 functions as the Nucleophile in the catalytic mechanism. Cys76 is modified (S-(2-succinyl)cysteine). The active-site Proton donor is the Cys194. A substrate-binding site is contributed by 195–196 (VQ).

The protein belongs to the maleate isomerase family. Homodimer.

It carries out the reaction maleate = fumarate. Functionally, catalyzes cis-trans isomerization of the C2-C3 double bond in maleate to yield fumarate. Shows a strict specificity for maleate, with no activity detected toward structurally related substrates including citraconate, mesaconate, dimethylmaleate, and maleamide. This Nocardia farcinica (strain IFM 10152) protein is Maleate isomerase.